We begin with the raw amino-acid sequence, 282 residues long: ADP-ribosyl cyclase/cyclic ADP-ribose hydrolase (282 aa).

The first 24 residues, 1-24, serve as a signal peptide directing secretion; sequence MSPVAIIACVCLAVTLTSISPSEA. 5 disulfides stabilise this stretch: cysteine 39/cysteine 58, cysteine 75/cysteine 155, cysteine 136/cysteine 149, cysteine 230/cysteine 251, and cysteine 263/cysteine 272.

Belongs to the ADP-ribosyl cyclase family. Has different isoforms which may be the result of different amounts of phosphorylation. Immature occoyctes. Oocytes.

It is found in the cytoplasmic vesicle. The enzyme catalyses NAD(+) = cyclic ADP-beta-D-ribose + nicotinamide + H(+). It carries out the reaction nicotinate + NADP(+) = nicotinate-adenine dinucleotide phosphate + nicotinamide. The catalysed reaction is 2'-phospho-cyclic ADP-ribose + nicotinate = nicotinate-adenine dinucleotide phosphate. Its activity is regulated as follows. Activity is presumably regulated by its sequestration in vesicles before egg fertilization. After fertilization and upon NADase release, it could then be regulated via its potential phosphorylation sites. Synthesizes cyclic ADP-ribose (cADPR), a second messenger for calcium mobilization from endoplasmic reticulum; ADP-ribose is a minor product. Synthesizes the Ca(2+) mobilizer nicotinate-adenine dinucleotide phosphate from 2'-phospho-cADPR and nicotinic acid as well as from NADP(+) and nicotinic acid; with NADP(+) as substrate preferentially catalyzes NADP(+) hydrolysis rather than NAADP(+) synthesis, about 70-fold better at pH 7.4. Has cADPR hydrolase activity at very high enzyme concentrations, which is probably not physiological. The conversion of NAD(+) into ADP-ribose is also only observed at high enzyme concentrations and results from the hydrolysis of cADP-ribose. The polypeptide is ADP-ribosyl cyclase/cyclic ADP-ribose hydrolase (Aplysia californica (California sea hare)).